Here is a 380-residue protein sequence, read N- to C-terminus: Cytochrome b (380 aa).

The next 4 helical transmembrane spans lie at 28 to 48, 72 to 93, 109 to 129, and 174 to 194; these read IGSL…FLSL, WLVR…YAHI, WLVG…GYVL, and FYSF…VHLL. The heme b site is built by His78 and His92. Heme b contacts are provided by His178 and His192. His197 contributes to the a ubiquinone binding site. The next 4 membrane-spanning stretches (helical) occupy residues 222–243, 285–305, 317–337, and 344–364; these read WKIL…CYIT, IGGV…PLAL, IGQL…WLGA, and YISL…LYMI.

This sequence belongs to the cytochrome b family. The main subunits of complex b-c1 are: cytochrome b, cytochrome c1 and the Rieske protein. Heme b serves as cofactor.

Its subcellular location is the mitochondrion inner membrane. Its function is as follows. Component of the ubiquinol-cytochrome c reductase complex (complex III or cytochrome b-c1 complex) that is part of the mitochondrial respiratory chain. The b-c1 complex mediates electron transfer from ubiquinol to cytochrome c. Contributes to the generation of a proton gradient across the mitochondrial membrane that is then used for ATP synthesis. The chain is Cytochrome b (MT-CYB) from Cepaea nemoralis (Banded wood snail).